The primary structure comprises 306 residues: Porphobilinogen deaminase (306 aa).

The residue at position 239 (C239) is an S-(dipyrrolylmethanemethyl)cysteine.

The protein belongs to the HMBS family. As to quaternary structure, monomer. Dipyrromethane is required as a cofactor.

The catalysed reaction is 4 porphobilinogen + H2O = hydroxymethylbilane + 4 NH4(+). It participates in porphyrin-containing compound metabolism; protoporphyrin-IX biosynthesis; coproporphyrinogen-III from 5-aminolevulinate: step 2/4. Tetrapolymerization of the monopyrrole PBG into the hydroxymethylbilane pre-uroporphyrinogen in several discrete steps. The sequence is that of Porphobilinogen deaminase from Helicobacter pylori (strain G27).